We begin with the raw amino-acid sequence, 192 residues long: MIVLVNNRDSFVWNLAEYASLFDRVKVVPNTITVGELRRLDPDGVIISPGPGHPLERREVGNSPEIVLEAGVPILGVCLGHQIIATAFGGKVGRVKPRHGKASPVKHDGKGVLRGIKNPLTAGRYHSLAVLEVPREFDVSAVSLDDNVVMGIRHRKLPIEGLQFHPESVLTEWERKEGLRIIKNFVEMSRNG.

The Glutamine amidotransferase type-1 domain maps to 1–192; it reads MIVLVNNRDS…KNFVEMSRNG (192 aa). An L-glutamine-binding site is contributed by 50-52; the sequence is GPG. C78 functions as the Nucleophile; for GATase activity in the catalytic mechanism. L-glutamine contacts are provided by residues Q82 and 127 to 128; that span reads SL. Active-site for GATase activity residues include H165 and E167.

Heterotetramer consisting of two non-identical subunits: a beta subunit (TrpG) and a large alpha subunit (TrpE).

The enzyme catalyses chorismate + L-glutamine = anthranilate + pyruvate + L-glutamate + H(+). The protein operates within amino-acid biosynthesis; L-tryptophan biosynthesis; L-tryptophan from chorismate: step 1/5. Part of a heterotetrameric complex that catalyzes the two-step biosynthesis of anthranilate, an intermediate in the biosynthesis of L-tryptophan. In the first step, the glutamine-binding beta subunit (TrpG) of anthranilate synthase (AS) provides the glutamine amidotransferase activity which generates ammonia as a substrate that, along with chorismate, is used in the second step, catalyzed by the large alpha subunit of AS (TrpE) to produce anthranilate. In the absence of TrpG, TrpE can synthesize anthranilate directly from chorismate and high concentrations of ammonia. The sequence is that of Anthranilate synthase component 2 (trpG) from Thermococcus kodakarensis (strain ATCC BAA-918 / JCM 12380 / KOD1) (Pyrococcus kodakaraensis (strain KOD1)).